The chain runs to 740 residues: Leucine-rich repeat neuronal protein 4 (740 aa).

The signal sequence occupies residues 1-18 (MRQTLPLLLLTVLRPSWA). Over 19–679 (DPPQEKVPLF…PCAAFTTKPS (661 aa)) the chain is Extracellular. Asparagine 42 is a glycosylation site (N-linked (GlcNAc...) asparagine). LRR repeat units lie at residues 51-74 (LPAA…GCLP), 75-97 (RTLR…ELGH), 98-123 (LEQL…GPAG), 125-144 (HTLD…TGPA), 145-168 (LSSL…AFAC), 174-197 (LLNL…AFAG), 203-226 (LVTL…WIRD), 228-251 (PKLT…IFKM), 253-276 (PNLQ…IFQD), and 277-300 (TPHL…TLDS). An N-linked (GlcNAc...) asparagine glycan is attached at asparagine 176. N-linked (GlcNAc...) asparagine glycans are attached at residues asparagine 289, asparagine 379, and asparagine 442. The tract at residues 389–517 (VAPSAAPATR…QAPNPSLSEG (129 aa)) is disordered. 2 stretches are compositionally biased toward polar residues: residues 430–454 (APST…STTR) and 490–514 (WDRS…NPSL). The 101-residue stretch at 579–679 (IPDPPRLQGV…PCAAFTTKPS (101 aa)) folds into the Fibronectin type-III domain. Asparagine 622 is a glycosylation site (N-linked (GlcNAc...) asparagine). A helical membrane pass occupies residues 680–700 (FALLLSGLCAASGLLLASTVV). Topologically, residues 701-740 (LSACLCRRGQTLGLQRCDTHLVAYKNPAFDDYPLGLQTVS) are cytoplasmic.

It localises to the membrane. Functionally, may play an important role in hippocampus-dependent long-lasting memory. The protein is Leucine-rich repeat neuronal protein 4 (LRRN4) of Homo sapiens (Human).